The sequence spans 498 residues: MPLELPSLNASIVGNTVQNGAVEQFLNIRYADIPGKFEKPVLKNDWNGAEIDATKVGPVCPQPRTPFNFFSVPDDLWEKVNVDTYQDGLLCDNLIVTRPKGVSANARLPTVVWIHGGSNIEGSIYNLIYEPQFLVAESVRVGKPIVHVCIEYRLGLAGFLTKNGKGNWGTWDQYTGCQWVNRHIQDFGGDPLNVTLTGESAGSVAVHNMLIKDSMNGRKLFRNAVMMSGTLETITPQPPKWHARLEEKVAKVTGKEVADLASLSDKELLDAQIKLNVAVCMTCDDGDFFEPGWKQHLTPDWLDKLIISDCKDEGMLYFLPVNAQDDEELLAKVAKSPVGKEISELYGIKEGGDIKSACLDLKTDATFNYFNHLLFKKMEEARNNGSTSRVYRLAVDEPNPHNPDQRAHHAVDVLYMFNSTKFNEHGDKLSRLFQSHFLRLAYGLEPWDHRNFGVYRNGGYQQLPLSELNKVRPVERYEALSKMDFGQVGRLSNALSRL.

A disulfide bridge connects residues Cys60 and Cys91. N-linked (GlcNAc...) asparagine glycosylation occurs at Asn193. Catalysis depends on Ser200, which acts as the Acyl-ester intermediate. An N-linked (GlcNAc...) asparagine glycan is attached at Asn384. His409 functions as the Charge relay system in the catalytic mechanism. Residue Asn418 is glycosylated (N-linked (GlcNAc...) asparagine).

This sequence belongs to the type-B carboxylesterase/lipase family.

It catalyses the reaction a triacylglycerol + H2O = a diacylglycerol + a fatty acid + H(+). This chain is Lipase 3 (LIP3), found in Yarrowia lipolytica (strain CLIB 122 / E 150) (Yeast).